Here is a 48-residue protein sequence, read N- to C-terminus: uncharacterized protein (48 aa).

The protein localises to the plastid. Its subcellular location is the cyanelle. This is an uncharacterized protein from Cyanophora paradoxa.